The primary structure comprises 404 residues: Multidrug resistance protein MdtG (404 aa).

11 consecutive transmembrane segments (helical) span residues 19–39, 56–76, 90–110, 113–133, 144–164, 171–191, 222–242, 254–274, 288–308, 317–337, and 376–396; these read LGCFLTGAAFSLVMPFLPLYV, LVFSITFLFSAIASPFWGGLA, LGMAIVMLLMGMAQNIWQFLI, ALLGLLGGFIPNANALIATQV, TLSTGGVSGALLGPLAGGLLA, PVFFITASVLFICFLLTFFFI, LFVTTLIIQVATGSIAPILTL, IAFISGMIASVPGVAALLSAP, ILIVALIISVLLLIPMSFVQT, FLLGAADGALLPAVQTLLVYN, and AVFCVTAGVVLFNAIYSWNSL.

The protein belongs to the major facilitator superfamily. DHA1 family. MdtG (TC 2.A.1.2.20) subfamily.

The protein resides in the cell inner membrane. This is Multidrug resistance protein MdtG from Salmonella typhi.